The primary structure comprises 201 residues: Small ribosomal subunit protein uS4c (201 aa).

A disordered region spans residues 15 to 43 (LGALPGLTNKRPRAGSDLRNQSRSGKKSQ). The S4 RNA-binding domain maps to 89 to 152 (MRLDNILFRL…NSRTLIQNSL (64 aa)).

It belongs to the universal ribosomal protein uS4 family. Part of the 30S ribosomal subunit. Contacts protein S5. The interaction surface between S4 and S5 is involved in control of translational fidelity.

It localises to the plastid. It is found in the chloroplast. Its function is as follows. One of the primary rRNA binding proteins, it binds directly to 16S rRNA where it nucleates assembly of the body of the 30S subunit. Functionally, with S5 and S12 plays an important role in translational accuracy. The polypeptide is Small ribosomal subunit protein uS4c (rps4) (Panax ginseng (Korean ginseng)).